The chain runs to 633 residues: Phosphomethylpyrimidine synthase (633 aa).

Over residues 1–13 (MNIRSNPDTTLPA) the composition is skewed to polar residues. Positions 1-22 (MNIRSNPDTTLPAVTTGPLPSS) are disordered. Substrate is bound by residues N221, M250, Y279, H315, 335–337 (SRG), 376–379 (DGLR), and E415. Residue H419 participates in Zn(2+) binding. Y442 lines the substrate pocket. Position 483 (H483) interacts with Zn(2+). Residues C563, C566, and C571 each coordinate [4Fe-4S] cluster.

The protein belongs to the ThiC family. Homodimer. It depends on [4Fe-4S] cluster as a cofactor.

It carries out the reaction 5-amino-1-(5-phospho-beta-D-ribosyl)imidazole + S-adenosyl-L-methionine = 4-amino-2-methyl-5-(phosphooxymethyl)pyrimidine + CO + 5'-deoxyadenosine + formate + L-methionine + 3 H(+). The protein operates within cofactor biosynthesis; thiamine diphosphate biosynthesis. Functionally, catalyzes the synthesis of the hydroxymethylpyrimidine phosphate (HMP-P) moiety of thiamine from aminoimidazole ribotide (AIR) in a radical S-adenosyl-L-methionine (SAM)-dependent reaction. In Bradyrhizobium sp. (strain BTAi1 / ATCC BAA-1182), this protein is Phosphomethylpyrimidine synthase.